The chain runs to 2203 residues: Genome polyprotein (2203 aa).

The N-myristoyl glycine; by host moiety is linked to residue glycine 2. Residues 2–1513 lie on the Cytoplasmic side of the membrane; it reads GAQVSTQKTG…HVSRAFICLQ (1512 aa). The interval 567 to 583 is amphipathic alpha-helix; it reads ELQNDVRQAVEGAIGRV. Residues histidine 890 and aspartate 908 each act as for protease 2A activity in the active site. Positions 925 and 927 each coordinate Zn(2+). The active-site For protease 2A activity is cysteine 979. The Zn(2+) site is built by cysteine 985 and histidine 987. The tract at residues 1119–1191 is membrane-binding; that stretch reads SNGWLKKFTE…EQSAPSQSDQ (73 aa). Residues 1119-1257 form an oligomerization region; the sequence is SNGWLKKFTE…SPGAGKSVAT (139 aa). Positions 1140 to 1144 are RNA-binding; the sequence is AVKIQ. One can recognise an SF3 helicase domain in the interval 1223–1379; sequence EKKMSNYIQF…SMYSQNGKIN (157 aa). Zn(2+)-binding residues include cysteine 1387, cysteine 1399, and cysteine 1404. The C4-type; degenerate zinc finger occupies 1387-1404; the sequence is CDEECCPVNFKRCCPLVC. The tract at residues 1431–1438 is RNA-binding; sequence EYNHRHSV. Positions 1442 to 1447 are oligomerization; that stretch reads LEALFQ. The stretch at 1514 to 1529 is an intramembrane region; sequence ALTTFVSVAGIIYIIY. Residues 1530 to 2203 lie on the Cytoplasmic side of the membrane; sequence KLFAGFQGAY…TLRRKWLDSF (674 aa). Tyrosine 1539 carries the O-(5'-phospho-RNA)-tyrosine modification. The 179-residue stretch at 1559 to 1737 folds into the Peptidase C3 domain; sequence GPAFEFAVAM…FSAALLRHYF (179 aa). Residues histidine 1598, glutamate 1629, and cysteine 1705 each act as for protease 3C activity in the active site. One can recognise a RdRp catalytic domain in the interval 1968-2084; sequence GHLIAFDYSG…SYPWPIDASL (117 aa). Positions 1974 and 2070 each coordinate Mg(2+).

This sequence belongs to the picornaviruses polyprotein family. Interacts with capsid protein VP1 and capsid protein VP3 to form heterotrimeric protomers. In terms of assembly, interacts with capsid protein VP0, and capsid protein VP3 to form heterotrimeric protomers. Five protomers subsequently associate to form pentamers which serve as building blocks for the capsid. Interacts with capsid protein VP2, capsid protein VP3 and capsid protein VP4 following cleavage of capsid protein VP0. As to quaternary structure, interacts with capsid protein VP1 and capsid protein VP3 in the mature capsid. Interacts with capsid protein VP0 and capsid protein VP1 to form heterotrimeric protomers. Five protomers subsequently associate to form pentamers which serve as building blocks for the capsid. Interacts with capsid protein VP4 in the mature capsid. Interacts with protein 2C; this interaction may be important for virion morphogenesis. In terms of assembly, interacts with capsid protein VP1 and capsid protein VP3. As to quaternary structure, homodimer. Homohexamer; forms a hexameric ring structure with 6-fold symmetry characteristic of AAA+ ATPases. Interacts (via N-terminus) with host RTN3 (via reticulon domain); this interaction is important for viral replication. Interacts with capsid protein VP3; this interaction may be important for virion morphogenesis. In terms of assembly, interacts with protein 3CD. As to quaternary structure, homodimer. Interacts with host GBF1. Interacts (via GOLD domain) with host ACBD3 (via GOLD domain); this interaction allows the formation of a viral protein 3A/ACBD3 heterotetramer with a 2:2 stoichiometry, which will stimulate the recruitment of host PI4KB in order to synthesize PI4P at the viral RNA replication sites. Interacts with RNA-directed RNA polymerase. In terms of assembly, interacts with protein 3AB and with RNA-directed RNA polymerase. As to quaternary structure, interacts with Viral protein genome-linked and with protein 3CD. Requires Mg(2+) as cofactor. Post-translationally, specific enzymatic cleavages in vivo by the viral proteases yield processing intermediates and the mature proteins. In terms of processing, myristoylation is required for the formation of pentamers during virus assembly. Further assembly of 12 pentamers and a molecule of genomic RNA generates the provirion. During virion maturation, immature virions are rendered infectious following cleavage of VP0 into VP4 and VP2. This maturation seems to be an autocatalytic event triggered by the presence of RNA in the capsid and it is followed by a conformational change infectious virion. Post-translationally, myristoylation is required during RNA encapsidation and formation of the mature virus particle. In terms of processing, VPg is uridylylated by the polymerase into VPg-pUpU. This acts as a nucleotide-peptide primer for the genomic RNA replication.

The protein localises to the virion. The protein resides in the host cytoplasm. It is found in the host cytoplasmic vesicle membrane. It localises to the host nucleus. It carries out the reaction a ribonucleoside 5'-triphosphate + H2O = a ribonucleoside 5'-diphosphate + phosphate + H(+). It catalyses the reaction Selective cleavage of Tyr-|-Gly bond in the picornavirus polyprotein.. The enzyme catalyses RNA(n) + a ribonucleoside 5'-triphosphate = RNA(n+1) + diphosphate. The catalysed reaction is Selective cleavage of Gln-|-Gly bond in the poliovirus polyprotein. In other picornavirus reactions Glu may be substituted for Gln, and Ser or Thr for Gly.. With respect to regulation, replication or transcription is subject to high level of random mutations by the nucleotide analog ribavirin. Its function is as follows. Forms an icosahedral capsid of pseudo T=3 symmetry with capsid proteins VP2 and VP3. The capsid is 300 Angstroms in diameter, composed of 60 copies of each capsid protein and enclosing the viral positive strand RNA genome. Capsid protein VP1 mainly forms the vertices of the capsid. Capsid protein VP1 interacts with host cell receptor to provide virion attachment to target host cells. This attachment induces virion internalization. Tyrosine kinases are probably involved in the entry process. After binding to its receptor, the capsid undergoes conformational changes. Capsid protein VP1 N-terminus (that contains an amphipathic alpha-helix) and capsid protein VP4 are externalized. Together, they shape a pore in the host membrane through which viral genome is translocated to host cell cytoplasm. Functionally, forms an icosahedral capsid of pseudo T=3 symmetry with capsid proteins VP2 and VP3. The capsid is 300 Angstroms in diameter, composed of 60 copies of each capsid protein and enclosing the viral positive strand RNA genome. In terms of biological role, lies on the inner surface of the capsid shell. After binding to the host receptor, the capsid undergoes conformational changes. Capsid protein VP4 is released, Capsid protein VP1 N-terminus is externalized, and together, they shape a pore in the host membrane through which the viral genome is translocated into the host cell cytoplasm. Component of immature procapsids, which is cleaved into capsid proteins VP4 and VP2 after maturation. Allows the capsid to remain inactive before the maturation step. Its function is as follows. Cysteine protease that cleaves viral polyprotein and specific host proteins. It is responsible for the autocatalytic cleavage between the P1 and P2 regions, which is the first cleavage occurring in the polyprotein. Also cleaves the host translation initiation factor EIF4G1, in order to shut down the capped cellular mRNA translation. Inhibits the host nucleus-cytoplasm protein and RNA trafficking by cleaving host members of the nuclear pores. Counteracts stress granule formation probably by antagonizing its assembly or promoting its dissassembly. Functionally, plays an essential role in the virus replication cycle by acting as a viroporin. Creates a pore in the host endoplasmic reticulum and as a consequence releases Ca2+ in the cytoplasm of infected cell. In turn, high levels of cytoplasmic calcium may trigger membrane trafficking and transport of viral ER-associated proteins to viroplasms, sites of viral genome replication. In terms of biological role, induces and associates with structural rearrangements of intracellular membranes. Displays RNA-binding, nucleotide binding and NTPase activities. May play a role in virion morphogenesis and viral RNA encapsidation by interacting with the capsid protein VP3. Localizes the viral replication complex to the surface of membranous vesicles. Together with protein 3CD binds the Cis-Active RNA Element (CRE) which is involved in RNA synthesis initiation. Acts as a cofactor to stimulate the activity of 3D polymerase, maybe through a nucleid acid chaperone activity. Its function is as follows. Localizes the viral replication complex to the surface of membranous vesicles. It inhibits host cell endoplasmic reticulum-to-Golgi apparatus transport and causes the disassembly of the Golgi complex, possibly through GBF1 interaction. This would result in depletion of MHC, trail receptors and IFN receptors at the host cell surface. Plays an essential role in viral RNA replication by recruiting ACBD3 and PI4KB at the viral replication sites, thereby allowing the formation of the rearranged membranous structures where viral replication takes place. Functionally, acts as a primer for viral RNA replication and remains covalently bound to viral genomic RNA. VPg is uridylylated prior to priming replication into VPg-pUpU. The oriI viral genomic sequence may act as a template for this. The VPg-pUpU is then used as primer on the genomic RNA poly(A) by the RNA-dependent RNA polymerase to replicate the viral genome. During genome replication, the VPg-RNA linkage is removed by the host TDP2, thereby accelerating replication. During the late stage of the replication cycle, host TDP2 is excluded from sites of viral RNA synthesis and encapsidation, allowing for the generation of progeny virions. In terms of biological role, involved in the viral replication complex and viral polypeptide maturation. It exhibits protease activity with a specificity and catalytic efficiency that is different from protease 3C. Protein 3CD lacks polymerase activity. Protein 3CD binds to the 5'UTR of the viral genome. Replicates the viral genomic RNA on the surface of intracellular membranes. May form linear arrays of subunits that propagate along a strong head-to-tail interaction called interface-I. Covalently attaches UMP to a tyrosine of VPg, which is used to prime RNA synthesis. The positive stranded RNA genome is first replicated at virus induced membranous vesicles, creating a dsRNA genomic replication form. This dsRNA is then used as template to synthesize positive stranded RNA genomes. ss(+)RNA genomes are either translated, replicated or encapsidated. Its function is as follows. Major viral protease that mediates proteolytic processing of the polyprotein. Cleaves host EIF5B, contributing to host translation shutoff. Also cleaves host PABPC1, contributing to host translation shutoff. Cleaves host NLRP1, triggers host N-glycine-mediated degradation of the autoinhibitory NLRP1 N-terminal fragment. This Echovirus 9 (strain Barty) protein is Genome polyprotein.